Consider the following 267-residue polypeptide: Small ribosomal subunit protein uS2 (267 aa).

The interval 225–267 (LREQELEGEEQEEAAPATEEEKKELIEEAVAEGEAEETEEEEK) is disordered. The span at 251-267 (EEAVAEGEAEETEEEEK) shows a compositional bias: acidic residues.

The protein belongs to the universal ribosomal protein uS2 family.

This Nitratiruptor sp. (strain SB155-2) protein is Small ribosomal subunit protein uS2.